Here is a 252-residue protein sequence, read N- to C-terminus: Zinc import ATP-binding protein ZnuC (252 aa).

An ABC transporter domain is found at 5 to 220 (VTLNKISVTF…PEFIAMFGQR (216 aa)). 37 to 44 (GPNGAGKS) lines the ATP pocket.

The protein belongs to the ABC transporter superfamily. Zinc importer (TC 3.A.1.15.5) family. In terms of assembly, the complex is composed of two ATP-binding proteins (ZnuC), two transmembrane proteins (ZnuB) and a solute-binding protein (ZnuA).

The protein resides in the cell inner membrane. It carries out the reaction Zn(2+)(out) + ATP(in) + H2O(in) = Zn(2+)(in) + ADP(in) + phosphate(in) + H(+)(in). Its function is as follows. Part of the ABC transporter complex ZnuABC involved in zinc import. Responsible for energy coupling to the transport system. This is Zinc import ATP-binding protein ZnuC from Yersinia enterocolitica serotype O:8 / biotype 1B (strain NCTC 13174 / 8081).